Here is a 95-residue protein sequence, read N- to C-terminus: Small ribosomal subunit protein uS19 (95 aa).

This sequence belongs to the universal ribosomal protein uS19 family.

Protein S19 forms a complex with S13 that binds strongly to the 16S ribosomal RNA. The sequence is that of Small ribosomal subunit protein uS19 from Clostridium kluyveri (strain NBRC 12016).